Consider the following 454-residue polypeptide: UPF0210 protein Mlab_1030 (454 aa).

This sequence belongs to the UPF0210 family.

The polypeptide is UPF0210 protein Mlab_1030 (Methanocorpusculum labreanum (strain ATCC 43576 / DSM 4855 / Z)).